The following is a 556-amino-acid chain: Jerky protein homolog (556 aa).

The 52-residue stretch at 11–62 (RGEKRKRVVLTLKEKIDICTRLEKGESRKALMQEYNVGMSTLYDIRAHKAQL) folds into the HTH psq-type domain. 2 consecutive DNA-binding regions (H-T-H motif) follow at residues 38–58 (RKALMQEYNVGMSTLYDIRAH) and 110–142 (PMLIEKAKDFYEQMQLTEPCVFSGGWLWRFKAR). The region spanning 77 to 149 (QRRTLHTPKL…KARHGIKKLD (73 aa)) is the HTH CENPB-type domain. Residues 213 to 382 (KDRLTVLMCA…VPSHVFRRAW (170 aa)) form the DDE-1 domain. Serine 414 carries the phosphoserine modification. The tract at residues 439 to 482 (SWGVAGREAEGGRPPAATSPAEVVWSSEKTPKADQDGRGDPGEG) is disordered. The segment covering 467 to 479 (KTPKADQDGRGDP) has biased composition (basic and acidic residues).

It belongs to the tigger transposable element derived protein family. As to expression, expressed ubiquitously.

The protein localises to the nucleus. May bind DNA. This is Jerky protein homolog from Homo sapiens (Human).